The primary structure comprises 293 residues: Ribonuclease Z (293 aa).

Zn(2+)-binding residues include His-60, His-62, Asp-64, His-65, His-132, Asp-200, and His-256. Residue Asp-64 is the Proton acceptor of the active site.

Belongs to the RNase Z family. As to quaternary structure, homodimer. Requires Zn(2+) as cofactor.

It catalyses the reaction Endonucleolytic cleavage of RNA, removing extra 3' nucleotides from tRNA precursor, generating 3' termini of tRNAs. A 3'-hydroxy group is left at the tRNA terminus and a 5'-phosphoryl group is left at the trailer molecule.. In terms of biological role, zinc phosphodiesterase, which displays some tRNA 3'-processing endonuclease activity. Probably involved in tRNA maturation, by removing a 3'-trailer from precursor tRNA. This is Ribonuclease Z from Sulfurisphaera tokodaii (strain DSM 16993 / JCM 10545 / NBRC 100140 / 7) (Sulfolobus tokodaii).